We begin with the raw amino-acid sequence, 70 residues long: Putative defensin-like protein 73 (70 aa).

Positions 1 to 29 are cleaved as a signal peptide; that stretch reads MNCKIEFMSFLVMTSIVILFLFVSGKVEA. 4 cysteine pairs are disulfide-bonded: Cys33/Cys68, Cys37/Cys57, Cys43/Cys66, and Cys47/Cys67.

The protein belongs to the DEFL family.

The protein resides in the secreted. This Arabidopsis thaliana (Mouse-ear cress) protein is Putative defensin-like protein 73 (LCR44).